The chain runs to 485 residues: ATP synthase subunit beta (485 aa).

The span at 1 to 11 shows a compositional bias: basic and acidic residues; the sequence is MPATETADKNT. Residues 1–20 form a disordered region; that stretch reads MPATETADKNTKSANSDTSG. Position 170–177 (170–177) interacts with ATP; it reads GGAGVGKT.

This sequence belongs to the ATPase alpha/beta chains family. F-type ATPases have 2 components, CF(1) - the catalytic core - and CF(0) - the membrane proton channel. CF(1) has five subunits: alpha(3), beta(3), gamma(1), delta(1), epsilon(1). CF(0) has three main subunits: a(1), b(2) and c(9-12). The alpha and beta chains form an alternating ring which encloses part of the gamma chain. CF(1) is attached to CF(0) by a central stalk formed by the gamma and epsilon chains, while a peripheral stalk is formed by the delta and b chains.

The protein resides in the cell membrane. It carries out the reaction ATP + H2O + 4 H(+)(in) = ADP + phosphate + 5 H(+)(out). In terms of biological role, produces ATP from ADP in the presence of a proton gradient across the membrane. The catalytic sites are hosted primarily by the beta subunits. The protein is ATP synthase subunit beta of Mycobacterium avium (strain 104).